The primary structure comprises 204 residues: RNA-free ribonuclease P (204 aa).

Belongs to the HARP family.

It catalyses the reaction Endonucleolytic cleavage of RNA, removing 5'-extranucleotides from tRNA precursor.. RNA-free RNase P that catalyzes the removal of the 5'-leader sequence from pre-tRNA to produce the mature 5'-terminus. This Ignicoccus hospitalis (strain KIN4/I / DSM 18386 / JCM 14125) protein is RNA-free ribonuclease P.